Here is a 365-residue protein sequence, read N- to C-terminus: Flagellar P-ring protein (365 aa).

The first 19 residues, 1–19 (MIKFLSALILLLVTTAAQA), serve as a signal peptide directing secretion.

The protein belongs to the FlgI family. As to quaternary structure, the basal body constitutes a major portion of the flagellar organelle and consists of four rings (L,P,S, and M) mounted on a central rod.

It localises to the periplasm. It is found in the bacterial flagellum basal body. In terms of biological role, assembles around the rod to form the L-ring and probably protects the motor/basal body from shearing forces during rotation. This is Flagellar P-ring protein from Escherichia coli O9:H4 (strain HS).